The sequence spans 521 residues: Ankyrin repeat domain-containing protein 34B (521 aa).

ANK repeat units lie at residues 9–38 (TESN…YINE), 42–79 (RGET…DPNI), 83–113 (FGKT…DPSL), and 117–146 (TGFS…AKGK). Residues 161–188 (QTTRQYLNVPPSPGIEGNNSPSPCTSPS) form a disordered region. Positions 177–188 (GNNSPSPCTSPS) are enriched in polar residues.

The protein belongs to the ANKRD34 family.

It localises to the cytoplasm. The protein resides in the nucleus. The sequence is that of Ankyrin repeat domain-containing protein 34B (ankrd34b) from Xenopus laevis (African clawed frog).